A 787-amino-acid polypeptide reads, in one-letter code: Longitudinals lacking protein, isoforms A/B/D/L (787 aa).

Positions 32–97 constitute a BTB domain; the sequence is VDCTLAAEGK…MYRGEVNISQ (66 aa). Disordered regions lie at residues 115 to 200, 228 to 340, 506 to 560, and 653 to 677; these read LSDN…SSVL, SSGP…ASAS, AKDV…SGGK, and TTGS…SVLG. Composition is skewed to low complexity over residues 162 to 175, 228 to 251, 263 to 293, 329 to 340, 537 to 560, and 659 to 668; these read SGDV…SSSP, SSGP…LTST, TSST…QTTS, NSATGPNPASAS, HSSS…SGGK, and SPSNSGHNNS. The C2H2-type 1; degenerate zinc-finger motif lies at 685 to 707; that stretch reads HPCPVCGRVYKLKSSLRNHQKWE. The C2H2-type 2 zinc finger occupies 714 to 737; sequence FQCPFCVYRAKQKMHIGRHMERMH.

In terms of assembly, isoform D interacts with JIL-1. As to expression, by stage 11, isoform B is expressed throughout the mesoderm, whereas isoform A, isoform D and isoform L are expressed throughout the ectoderm. Expression becomes restricted during later stages; starting from stage 14 to 16, isoform B is expressed in muscle. Isoform A, isoform D, and at low levels isoform B, are expressed in the CNS. Expression is also seen in specific types of cells in the embryo; isoform A and isoform L are expressed in a dynamic pattern in the ventral neurogenic region starting at stage 7. Isoform L is expressed around the tracheal pits at stage 11.

The protein localises to the nucleus. In terms of biological role, putative transcription factor required for axon growth and guidance in the central and peripheral nervous systems. Repels CNS axons away from the midline by promoting the expression of the midline repellent sli and its receptor robo. The sequence is that of Longitudinals lacking protein, isoforms A/B/D/L from Drosophila melanogaster (Fruit fly).